The primary structure comprises 341 residues: Protein pelota homolog (341 aa).

Belongs to the eukaryotic release factor 1 family. Pelota subfamily. Monomer. A divalent metal cation serves as cofactor.

It localises to the cytoplasm. Functionally, may function in recognizing stalled ribosomes, interact with stem-loop structures in stalled mRNA molecules, and effect endonucleolytic cleavage of the mRNA. May play a role in the release non-functional ribosomes and degradation of damaged mRNAs. Has endoribonuclease activity. This is Protein pelota homolog from Sulfurisphaera tokodaii (strain DSM 16993 / JCM 10545 / NBRC 100140 / 7) (Sulfolobus tokodaii).